Reading from the N-terminus, the 341-residue chain is UDP-3-O-acylglucosamine N-acyltransferase (341 aa).

Catalysis depends on H255, which acts as the Proton acceptor.

It belongs to the transferase hexapeptide repeat family. LpxD subfamily. As to quaternary structure, homotrimer.

It carries out the reaction a UDP-3-O-[(3R)-3-hydroxyacyl]-alpha-D-glucosamine + a (3R)-hydroxyacyl-[ACP] = a UDP-2-N,3-O-bis[(3R)-3-hydroxyacyl]-alpha-D-glucosamine + holo-[ACP] + H(+). It functions in the pathway bacterial outer membrane biogenesis; LPS lipid A biosynthesis. Functionally, catalyzes the N-acylation of UDP-3-O-acylglucosamine using 3-hydroxyacyl-ACP as the acyl donor. Is involved in the biosynthesis of lipid A, a phosphorylated glycolipid that anchors the lipopolysaccharide to the outer membrane of the cell. In Granulibacter bethesdensis (strain ATCC BAA-1260 / CGDNIH1), this protein is UDP-3-O-acylglucosamine N-acyltransferase.